The sequence spans 385 residues: GTPase Obg (385 aa).

The Obg domain occupies 1–159 (MKFVDEVEIR…RNLKLELLLL (159 aa)). Residues 160–333 (ADVGLLGLPN…LIHDVMTLLE (174 aa)) form the OBG-type G domain. Residues 166-173 (GLPNAGKS), 191-195 (FTTLI), 213-216 (DIPG), 283-286 (NKID), and 314-316 (SAI) each bind GTP. Residues serine 173 and threonine 193 each contribute to the Mg(2+) site.

This sequence belongs to the TRAFAC class OBG-HflX-like GTPase superfamily. OBG GTPase family. As to quaternary structure, monomer. The cofactor is Mg(2+).

It is found in the cytoplasm. An essential GTPase which binds GTP, GDP and possibly (p)ppGpp with moderate affinity, with high nucleotide exchange rates and a fairly low GTP hydrolysis rate. Plays a role in control of the cell cycle, stress response, ribosome biogenesis and in those bacteria that undergo differentiation, in morphogenesis control. This is GTPase Obg from Pseudoalteromonas translucida (strain TAC 125).